The chain runs to 644 residues: Pentatricopeptide repeat-containing protein At1g12775, mitochondrial (644 aa).

A mitochondrion-targeting transit peptide spans methionine 1–asparagine 53. PPR repeat units follow at residues threonine 87 to histidine 121, serine 122 to proline 156, aspartate 157 to proline 191, threonine 192 to proline 226, asparagine 227 to leucine 261, aspartate 262 to alanine 296, aspartate 297 to proline 331, asparagine 332 to proline 366, asparagine 367 to proline 401, aspartate 402 to alanine 436, asparagine 437 to proline 471, aspartate 472 to leucine 506, aspartate 507 to leucine 541, aspartate 542 to proline 576, and aspartate 577 to alanine 611.

This sequence belongs to the PPR family. P subfamily.

The protein localises to the mitochondrion. This chain is Pentatricopeptide repeat-containing protein At1g12775, mitochondrial, found in Arabidopsis thaliana (Mouse-ear cress).